The following is a 232-amino-acid chain: MDKEELKRRAAARALEEVRGGMKLGLGTGSTAKHFVELLGERVRLGLEIIGVPTSEVTRADAERCGIRLTSLDEIDRLDITIDGADEVDHHLDLIKGGGGALLREKIVAAASDRMIVIADESKLVDTLGRFPLPIEVIPFGLGATRRALQNAFTAAGCDGELKLRPGKDGHAFVTDGGHWILDAQLGRIPDAPRLAQLLSVIPGVVEHGLFVGMASTVVLAGADGIRTIERA.

Residues 28 to 31 (TGST), 83 to 86 (DGAD), and 96 to 99 (KGGG) each bind substrate. E105 serves as the catalytic Proton acceptor. K123 contributes to the substrate binding site.

It belongs to the ribose 5-phosphate isomerase family. As to quaternary structure, homodimer.

It catalyses the reaction aldehydo-D-ribose 5-phosphate = D-ribulose 5-phosphate. Its pathway is carbohydrate degradation; pentose phosphate pathway; D-ribose 5-phosphate from D-ribulose 5-phosphate (non-oxidative stage): step 1/1. Catalyzes the reversible conversion of ribose-5-phosphate to ribulose 5-phosphate. In Rhodopseudomonas palustris (strain ATCC BAA-98 / CGA009), this protein is Ribose-5-phosphate isomerase A.